Reading from the N-terminus, the 1831-residue chain is Transmembrane protein 131 homolog (1831 aa).

A signal peptide spans 1–29; sequence MVPSIHKTSNRYRTIYFFLISLLITSTFA. At 30-1169 the chain is on the lumenal side; that stretch reads DQQAWPLPEE…QALPRPPFEN (1140 aa). Residues 118–294 form a papD-L domain region; the sequence is EMDPPMMDFG…QSKQIATLVL (177 aa). The chain crosses the membrane as a helical span at residues 1170 to 1190; sequence IMYYSCVTALIFCLVCVLACA. At 1191–1831 the chain is on the cytoplasmic side; sequence YLEGDRAIAV…TDNENDEKNN (641 aa). A compositionally biased stretch (low complexity) spans 1223–1234; the sequence is STTTPVPTVPST. Disordered stretches follow at residues 1223–1252, 1325–1516, 1663–1759, and 1800–1831; these read STTT…RPST, GQQK…PTDD, QMKR…VSNP, and WSSS…EKNN. Residues 1338-1349 show a composition bias toward acidic residues; it reads PEFDEVEEEELA. Low complexity-rich tracts occupy residues 1394–1407 and 1435–1448; these read PIIV…PPVQ and QVPP…TPKT. The segment covering 1455 to 1467 has biased composition (basic and acidic residues); sequence EPEKPIKPSEQKK. The segment covering 1480–1497 has biased composition (polar residues); it reads TPSKARTPSKTPSQSNRA. Residues 1500–1514 show a composition bias toward low complexity; that stretch reads PASSPAPIAPTSAPT. Composition is skewed to polar residues over residues 1669–1687, 1702–1733, and 1742–1758; these read SPSQ…SPQK, NQSS…NSIQ, and WGDN…TVSN. A compositionally biased stretch (low complexity) spans 1808–1820; sequence PPTQQPSTSQMPQ. The span at 1822–1831 shows a compositional bias: acidic residues; sequence TDNENDEKNN.

The protein belongs to the TMEM131 family. May interact (via PapD-L domain) with collagen proteins (via C-terminus); the interaction is direct and is involved in assembly and secretion of collagen. Predominantly expressed in the intestine and hypodermis.

The protein resides in the membrane. Its subcellular location is the endoplasmic reticulum membrane. Collagen binding transmembrane protein involved in collagen secretion, probably by recruiting the ER-to-Golgi transport complex TRAPPIII. Required for normal development. In Caenorhabditis elegans, this protein is Transmembrane protein 131 homolog.